The chain runs to 173 residues: NADH-ubiquinone oxidoreductase chain 6 (173 aa).

A run of 5 helical transmembrane segments spans residues 1 to 21, 27 to 47, 48 to 68, 87 to 107, and 139 to 159; these read MTYF…AVAS, YGVV…VNLG, VSFV…VVFV, VMGY…LGGF, and YGVG…FVVL.

It belongs to the complex I subunit 6 family.

It is found in the mitochondrion membrane. The catalysed reaction is a ubiquinone + NADH + 5 H(+)(in) = a ubiquinol + NAD(+) + 4 H(+)(out). Functionally, core subunit of the mitochondrial membrane respiratory chain NADH dehydrogenase (Complex I) that is believed to belong to the minimal assembly required for catalysis. Complex I functions in the transfer of electrons from NADH to the respiratory chain. The immediate electron acceptor for the enzyme is believed to be ubiquinone. The chain is NADH-ubiquinone oxidoreductase chain 6 (MT-ND6) from Coturnix japonica (Japanese quail).